The following is a 505-amino-acid chain: MEELQGYLEIDGFRQHHFLYPLLLQEYIYALAHDHGLNGSILSEHMENLSHDNKSSSLIVKRLITRMHQQNHFIISVNDSNQKGFVGHNKNFHSQKISEGFAVIVEIPFSLQLVSSLEEKEIAKFHNSRSIHSIFPFFEDKLSHLNHVSDILIPYPIHLEILVQTLRCWIQDAPSLHLLRFFLHEYWNSNSLITPKKSISFFSKENQRLFLFLYNSHVYECESVFIFLRKQSSHLRSTSFGSFLERTHFYGKIEHLVVVLGNDFPKTLWLFKDPFVHYVRYQGKSILASRGTQFLIKKWKYHLVNFWQCHFYLWSQPDRIHLNQLCNHSFYFLGYLSSVQLNSSVVRSQMLENAFRMDTAIKKFETIVPIIPLIGSLAKAKFCNGSGHPISKPFRTDLSDSEIINRFGRICKNLSHYHSGSSKKQSLYRIKFILRLSCARTLSRKHKSTVRAFLKRLGSELLEEFLTEEEQVLSLLFPRTPSHRPHRERIWYLDIICINDLANHE.

This sequence belongs to the intron maturase 2 family. MatK subfamily.

It localises to the plastid. The protein localises to the chloroplast. Its function is as follows. Usually encoded in the trnK tRNA gene intron. Probably assists in splicing its own and other chloroplast group II introns. The polypeptide is Maturase K (Calycanthus floridus (Eastern sweetshrub)).